A 438-amino-acid chain; its full sequence is 23S rRNA (uracil(1939)-C(5))-methyltransferase RlmD (438 aa).

The region spanning 10-69 (KASVNTKHLSVDVVRLDHNSAGIAFVDKKPVFIEGALPEEQAIIQFIEQKKQYSRAKLIK) is the TRAM domain. The [4Fe-4S] cluster site is built by cysteine 82, cysteine 88, cysteine 91, and cysteine 169. 6 residues coordinate S-adenosyl-L-methionine: glutamine 272, phenylalanine 301, asparagine 306, glutamate 322, asparagine 349, and aspartate 370. The active-site Nucleophile is cysteine 396.

This sequence belongs to the class I-like SAM-binding methyltransferase superfamily. RNA M5U methyltransferase family. RlmD subfamily.

The catalysed reaction is uridine(1939) in 23S rRNA + S-adenosyl-L-methionine = 5-methyluridine(1939) in 23S rRNA + S-adenosyl-L-homocysteine + H(+). Its function is as follows. Catalyzes the formation of 5-methyl-uridine at position 1939 (m5U1939) in 23S rRNA. In Aliivibrio salmonicida (strain LFI1238) (Vibrio salmonicida (strain LFI1238)), this protein is 23S rRNA (uracil(1939)-C(5))-methyltransferase RlmD.